Here is a 610-residue protein sequence, read N- to C-terminus: UvrABC system protein C (610 aa).

The GIY-YIG domain occupies 19-97 (GAPGVYKMLD…IKRHKPRYNI (79 aa)). Residues 207 to 242 (EALIDRLAQRMEQAAQRLEFEKAARYRDQISNLRTV) form the UVR domain.

The protein belongs to the UvrC family. As to quaternary structure, interacts with UvrB in an incision complex.

Its subcellular location is the cytoplasm. Its function is as follows. The UvrABC repair system catalyzes the recognition and processing of DNA lesions. UvrC both incises the 5' and 3' sides of the lesion. The N-terminal half is responsible for the 3' incision and the C-terminal half is responsible for the 5' incision. This Methylococcus capsulatus (strain ATCC 33009 / NCIMB 11132 / Bath) protein is UvrABC system protein C.